Reading from the N-terminus, the 60-residue chain is Large ribosomal subunit protein bL33 (60 aa).

This sequence belongs to the bacterial ribosomal protein bL33 family.

This Chlorobium phaeobacteroides (strain DSM 266 / SMG 266 / 2430) protein is Large ribosomal subunit protein bL33.